Reading from the N-terminus, the 315-residue chain is Olfactory receptor 8J2 (315 aa).

Residues 1–24 (MASGNLTWVTEFILVGVSDDPELQ) lie on the Extracellular side of the membrane. A glycan (N-linked (GlcNAc...) asparagine) is linked at Asn5. A helical membrane pass occupies residues 25-45 (IPLFLVFLVLYLLTVAGNLGI). Residues 46–57 (ITLTSVDPQLQT) are Cytoplasmic-facing. A helical membrane pass occupies residues 58–78 (PMYFFLRHLAIINLCNSTVVA). The Extracellular portion of the chain corresponds to 79–97 (PKMLVNFLVTKKTISYYGC). A disulfide bridge connects residues Cys97 and Cys179. The chain crosses the membrane as a helical span at residues 98–118 (AAQLGGFLVFIVAEIFTLAAM). At 119 to 143 (AYDRYVAIWSPLLYAVVVSPKVCRL) the chain is on the cytoplasmic side. The helical transmembrane segment at 144–164 (LVSLTYLQSLITALTVSSCVF) threads the bilayer. At 165-205 (SVSYCSSNIINHFYCDDVPLLALSCSDTYIPETAVFIFSGT) the chain is on the extracellular side. The helical transmembrane segment at 206–226 (NLLFSMIVVLISYFNIVITIL) threads the bilayer. Residues 227–239 (RIRSSEGRQKAFS) lie on the Cytoplasmic side of the membrane. A helical transmembrane segment spans residues 240–260 (TCASHMIAVVVFYGTLLFMYL). Residues 261–271 (QPRSNHSLDTD) are Extracellular-facing. N-linked (GlcNAc...) asparagine glycosylation occurs at Asn265. The chain crosses the membrane as a helical span at residues 272-292 (KMASVFYTLVIPVLNPLIYSL). At 293 to 315 (RNKNVKDALKRFLDNPCRSLKLM) the chain is on the cytoplasmic side.

This sequence belongs to the G-protein coupled receptor 1 family.

Its subcellular location is the membrane. Odorant receptor. The chain is Olfactory receptor 8J2 (OR8J2) from Homo sapiens (Human).